Consider the following 277-residue polypeptide: Outer kinetochore KNL1 complex subunit ZWINT (277 aa).

An interaction with NDC80 and ZW10 region spans residues alanine 80–glutamine 155. Residues arginine 104–tyrosine 217 are a coiled coil. The interval alanine 228–proline 277 is disordered. A compositionally biased stretch (polar residues) spans glutamine 241–aspartate 253.

As to quaternary structure, component of the KNL1 complex composed of KNL1 and ZWINT. Part of the ten-subunit outer kinetochore KMN network that includes the KNL1, MIS12 and NDC80 complexes; a bioriented kinetochore contains approximately 150 copies of the network. Interacts with the MIS12 complex subunits MIS12 DSN1, and PMF1. Interacts with the NDC80 complex subunit NDC80 during mitosis. Interacts with ZW10. Interacts with CETN3.

The protein resides in the nucleus. Its subcellular location is the chromosome. It is found in the centromere. The protein localises to the kinetochore. Its function is as follows. Acts as a component of the outer kinetochore KNL1 complex that serves as a docking point for spindle assembly checkpoint components and mediates microtubule-kinetochore interactions. Kinetochores, consisting of a centromere-associated inner segment and a microtubule-contacting outer segment, play a crucial role in chromosome segregation by mediating the physical connection between centromeric DNA and spindle microtubules. The outer kinetochore is made up of the ten-subunit KMN network, comprising the MIS12, NDC80 and KNL1 complexes, and auxiliary microtubule-associated components; together they connect the outer kinetochore with the inner kinetochore, bind microtubules, and mediate interactions with mitotic checkpoint proteins that delay anaphase until chromosomes are bioriented on the spindle. Targets the RZZ complex to the kinetochore at prometaphase. Recruits MAD2L1 to the kinetochore, but is not required for BUB1B localization. In addition to orienting mitotic chromosomes, it is also essential for alignment of homologous chromosomes during meiotic metaphase I. In meiosis I, required to activate the spindle assembly checkpoint at unattached kinetochores to correct erroneous kinetochore-microtubule attachments. This is Outer kinetochore KNL1 complex subunit ZWINT (ZWINT) from Homo sapiens (Human).